The following is a 935-amino-acid chain: Coatomer subunit gamma (935 aa).

HEAT repeat units follow at residues 258–296 (PQLF…RNSR), 337–372 (PEKI…TGTS), 373–410 (KNIS…NFPQ), 412–449 (WKSI…FVPQ), and 524–562 (PTLY…ARNK). Residues 630 to 656 (KSETTLDTTPEAESVPEKRADANSFAG) form a disordered region. At T638 the chain carries Phosphothreonine. S643 is subject to Phosphoserine. K647 participates in a covalent cross-link: Glycyl lysine isopeptide (Lys-Gly) (interchain with G-Cter in ubiquitin). Phosphoserine is present on S653.

It belongs to the COPG family. As to quaternary structure, oligomeric complex that consists of at least the alpha, beta, beta', gamma, delta, epsilon and zeta subunits. Interacts (via C-terminus) with GEA1 (via N-terminal region) and KEI1 (via C-terminal region).

The protein localises to the cytoplasm. The protein resides in the golgi apparatus membrane. Its subcellular location is the cytoplasmic vesicle. It localises to the COPI-coated vesicle membrane. It is found in the endosome. Functionally, the coatomer is a cytosolic protein complex that binds to dilysine motifs and reversibly associates with Golgi non-clathrin-coated vesicles, which further mediate biosynthetic protein transport from the ER, via the Golgi up to the trans Golgi network. Coatomer complex is required for budding from Golgi membranes, and is essential for the retrograde Golgi-to-ER transport of dilysine-tagged proteins. The chain is Coatomer subunit gamma (SEC21) from Saccharomyces cerevisiae (strain ATCC 204508 / S288c) (Baker's yeast).